A 278-amino-acid chain; its full sequence is Elongation factor Ts (278 aa).

The segment at 80 to 83 (TDFV) is involved in Mg(2+) ion dislocation from EF-Tu.

Belongs to the EF-Ts family.

It localises to the cytoplasm. Associates with the EF-Tu.GDP complex and induces the exchange of GDP to GTP. It remains bound to the aminoacyl-tRNA.EF-Tu.GTP complex up to the GTP hydrolysis stage on the ribosome. In Paenarthrobacter aurescens (strain TC1), this protein is Elongation factor Ts.